The chain runs to 836 residues: General vesicular transport factor p115 (836 aa).

The segment at M1–S22 is disordered. Over residues L12–S22 the composition is skewed to polar residues. 11 ARM repeats span residues A24–Q64, G65–P124, H126–V166, M169–E210, N211–G256, R316–V359, P368–L413, S424–L463, T477–L518, T523–R577, and G579–G636. Coiled coils occupy residues I663–T707 and N744–G806. The segment at E803–R836 is disordered. A compositionally biased stretch (polar residues) spans G806–V816. The span at A817–R836 shows a compositional bias: low complexity.

Belongs to the VDP/USO1/EDE1 family.

It is found in the cytoplasm. It localises to the golgi apparatus. Its subcellular location is the golgi stack. The protein localises to the golgi stack membrane. The protein resides in the endoplasmic reticulum. It is found in the endoplasmic reticulum membrane. In terms of biological role, essential for maintaining the architecture of the Golgi stacks and for normal organization of the transitional endoplasmic reticulum (tER). Required for both the formation of the Golgi stacks and the maintenance of the individual cisternae. The chain is General vesicular transport factor p115 from Drosophila melanogaster (Fruit fly).